Consider the following 214-residue polypeptide: Vascular endothelial growth factor A (214 aa).

An N-terminal signal peptide occupies residues 1–26 (MNFLLSWVHWTLALLLYLHHAKWSQA). 3 disulfide bridges follow: Cys51-Cys93, Cys82-Cys127, and Cys86-Cys129. An N-linked (GlcNAc...) asparagine glycan is attached at Asn100. Positions 131 to 142 (PKKDRTKPEKKS) are enriched in basic and acidic residues. The tract at residues 131–159 (PKKDRTKPEKKSVRGKGKGQKRKRKKSRF) is disordered. Residues 143-159 (VRGKGKGQKRKRKKSRF) show a composition bias toward basic residues.

This sequence belongs to the PDGF/VEGF growth factor family. In terms of assembly, homodimer; disulfide-linked. Also found as heterodimer with PGF. Interacts with NRP1. Interacts with isoform 2 of BSG. Interacts with CD82; this interaction inhibits VEGFA-mediated signaling pathway. Expressed in the pituitary, in brain, in particularly in supraoptic and paraventricular nuclei and the choroid plexus. Also found abundantly in the corpus luteum of the ovary and in kidney glomeruli. Expressed in the ductal epithelial cells of post-pubertal mammary glands. Expressed in the ductal and alveolar epithelial cells throughout the whole period of gestational evolution, lactation and involution.

The protein resides in the secreted. Its function is as follows. Growth factor active in angiogenesis, vasculogenesis and endothelial cell growth. Induces endothelial cell proliferation, promotes cell migration, inhibits apoptosis and induces permeabilization of blood vessels. Binds to the FLT1/VEGFR1 and KDR/VEGFR2 receptors, heparan sulfate and heparin. May play a role in increasing vascular permeability during lactation, when increased transport of molecules from the blood is required for efficient milk protein synthesis. Binding to NRP1 receptor initiates a signaling pathway needed for motor neuron axon guidance and cell body migration, including for the caudal migration of facial motor neurons from rhombomere 4 to rhombomere 6 during embryonic development. Also binds the DEAR/FBXW7-AS1 receptor. This chain is Vascular endothelial growth factor A (Vegfa), found in Rattus norvegicus (Rat).